Here is a 358-residue protein sequence, read N- to C-terminus: Chorismate synthase (358 aa).

Residue Arg-47 participates in NADP(+) binding. FMN-binding positions include 124–126 (RSS), 240–241 (NA), Gly-284, 299–303 (KPVAT), and Arg-325.

The protein belongs to the chorismate synthase family. As to quaternary structure, homotetramer. Requires FMNH2 as cofactor.

The catalysed reaction is 5-O-(1-carboxyvinyl)-3-phosphoshikimate = chorismate + phosphate. It participates in metabolic intermediate biosynthesis; chorismate biosynthesis; chorismate from D-erythrose 4-phosphate and phosphoenolpyruvate: step 7/7. Catalyzes the anti-1,4-elimination of the C-3 phosphate and the C-6 proR hydrogen from 5-enolpyruvylshikimate-3-phosphate (EPSP) to yield chorismate, which is the branch point compound that serves as the starting substrate for the three terminal pathways of aromatic amino acid biosynthesis. This reaction introduces a second double bond into the aromatic ring system. In Phocaeicola vulgatus (strain ATCC 8482 / DSM 1447 / JCM 5826 / CCUG 4940 / NBRC 14291 / NCTC 11154) (Bacteroides vulgatus), this protein is Chorismate synthase.